Reading from the N-terminus, the 608-residue chain is Bifunctional lycopene cyclase/phytoene synthase (608 aa).

The segment at 1–240 (MSILTYLEFH…LVFATCAIDR (240 aa)) is lycopene beta-cyclase. 7 helical membrane passes run 3-23 (ILTYLEFHLYYTLPVLAALCW), 37-56 (YKFLMLMAASTASIWDNYIV), 80-97 (YMFFIIMTLMTVAFSNFV), 117-137 (LLVRLVPVSALLAITYHAWHL), 150-170 (ILWYACPVLAILWLGAGEYIL), 175-195 (AVLLSIVIPSVYLCWADIVAI), and 218-238 (VEECLFFTLINTVLVFATCAI). Residues 247-608 (LYKSSVQNQN…ARKIKSFFVD (362 aa)) form a phytoene synthase region.

This sequence in the N-terminal section; belongs to the lycopene beta-cyclase family. It in the C-terminal section; belongs to the phytoene/squalene synthase family.

Its subcellular location is the membrane. The enzyme catalyses all-trans-lycopene = gamma-carotene. It catalyses the reaction gamma-carotene = all-trans-beta-carotene. The catalysed reaction is 2 (2E,6E,10E)-geranylgeranyl diphosphate = 15-cis-phytoene + 2 diphosphate. The protein operates within carotenoid biosynthesis; beta-carotene biosynthesis. It participates in carotenoid biosynthesis; phytoene biosynthesis; all-trans-phytoene from geranylgeranyl diphosphate: step 1/1. Functionally, bifunctional enzyme that catalyzes the reactions from geranylgeranyl diphosphate to phytoene (phytoene synthase) and lycopene to beta-carotene via the intermediate gamma-carotene (lycopene cyclase). The polypeptide is Bifunctional lycopene cyclase/phytoene synthase (Blakeslea trispora (Choanephora trispora)).